Consider the following 334-residue polypeptide: Formamidase (334 aa).

Residues 14 to 260 (FLVAAIQFPV…WEIVTGEIYP (247 aa)) form the CN hydrolase domain. Glu60 acts as the Proton acceptor in catalysis. Lys133 serves as the catalytic Proton donor. The active-site Nucleophile is the Cys166.

It belongs to the carbon-nitrogen hydrolase superfamily. Aliphatic amidase family. Homotetramer.

It carries out the reaction formamide + H2O = formate + NH4(+). Inhibited by iodoacetate. Appears to be regulated by the fur protein, but this effect is not mediated at the transcriptional level. Its function is as follows. Is an aliphatic amidase with a restricted substrate specificity, as it only hydrolyzes formamide. Probably involved in the nitrogen metabolism of H.pylori. This chain is Formamidase (amiF), found in Helicobacter pylori (strain ATCC 700392 / 26695) (Campylobacter pylori).